Consider the following 541-residue polypeptide: Chaperonin GroEL 2 (541 aa).

Residues 29–32, 86–90, Gly413, 476–478, and Asp492 each bind ATP; these read TLGP, DGTTT, and NAA.

It belongs to the chaperonin (HSP60) family. As to quaternary structure, forms a cylinder of 14 subunits composed of two heptameric rings stacked back-to-back. Interacts with the co-chaperonin GroES.

The protein resides in the secreted. It is found in the capsule. It localises to the cell surface. Its subcellular location is the cell wall. The catalysed reaction is ATP + H2O + a folded polypeptide = ADP + phosphate + an unfolded polypeptide.. Its function is as follows. Together with its co-chaperonin GroES, plays an essential role in assisting protein folding. The GroEL-GroES system forms a nano-cage that allows encapsulation of the non-native substrate proteins and provides a physical environment optimized to promote and accelerate protein folding. This is Chaperonin GroEL 2 from Mycobacterium sp. (strain KMS).